The following is an 89-amino-acid chain: Small ribosomal subunit protein uS15 (89 aa).

It belongs to the universal ribosomal protein uS15 family. In terms of assembly, part of the 30S ribosomal subunit. Forms a bridge to the 50S subunit in the 70S ribosome, contacting the 23S rRNA.

One of the primary rRNA binding proteins, it binds directly to 16S rRNA where it helps nucleate assembly of the platform of the 30S subunit by binding and bridging several RNA helices of the 16S rRNA. In terms of biological role, forms an intersubunit bridge (bridge B4) with the 23S rRNA of the 50S subunit in the ribosome. The chain is Small ribosomal subunit protein uS15 from Bifidobacterium animalis subsp. lactis (strain AD011).